A 688-amino-acid chain; its full sequence is UvrABC system protein C (688 aa).

A GIY-YIG domain is found at 11 to 90 (LTPGVYLYKD…IKKHRPRYNI (80 aa)). Positions 200 to 235 (GELVDALRTEMEAASQGLDFERAAVLRDRIRALERT) constitute a UVR domain.

This sequence belongs to the UvrC family. In terms of assembly, interacts with UvrB in an incision complex.

It localises to the cytoplasm. In terms of biological role, the UvrABC repair system catalyzes the recognition and processing of DNA lesions. UvrC both incises the 5' and 3' sides of the lesion. The N-terminal half is responsible for the 3' incision and the C-terminal half is responsible for the 5' incision. The protein is UvrABC system protein C of Nitratidesulfovibrio vulgaris (strain ATCC 29579 / DSM 644 / CCUG 34227 / NCIMB 8303 / VKM B-1760 / Hildenborough) (Desulfovibrio vulgaris).